Here is a 116-residue protein sequence, read N- to C-terminus: Ribosome-binding factor A (116 aa).

It belongs to the RbfA family. In terms of assembly, monomer. Binds 30S ribosomal subunits, but not 50S ribosomal subunits or 70S ribosomes.

The protein localises to the cytoplasm. Its function is as follows. One of several proteins that assist in the late maturation steps of the functional core of the 30S ribosomal subunit. Associates with free 30S ribosomal subunits (but not with 30S subunits that are part of 70S ribosomes or polysomes). Required for efficient processing of 16S rRNA. May interact with the 5'-terminal helix region of 16S rRNA. In Malacoplasma penetrans (strain HF-2) (Mycoplasma penetrans), this protein is Ribosome-binding factor A.